A 146-amino-acid chain; its full sequence is Transcriptional regulator MraZ (146 aa).

SpoVT-AbrB domains lie at 9–55 (ASAL…PRPA) and 81–124 (AMDV…DVQR).

It belongs to the MraZ family. As to quaternary structure, forms oligomers.

Its subcellular location is the cytoplasm. The protein resides in the nucleoid. In Methylibium petroleiphilum (strain ATCC BAA-1232 / LMG 22953 / PM1), this protein is Transcriptional regulator MraZ.